The following is a 178-amino-acid chain: Probable inosine/xanthosine triphosphatase (178 aa).

This sequence belongs to the YjjX NTPase family. As to quaternary structure, homodimer. Mg(2+) is required as a cofactor. Mn(2+) serves as cofactor.

The catalysed reaction is XTP + H2O = XDP + phosphate + H(+). It catalyses the reaction ITP + H2O = IDP + phosphate + H(+). Its function is as follows. Phosphatase that hydrolyzes non-canonical purine nucleotides such as XTP and ITP to their respective diphosphate derivatives. Probably excludes non-canonical purines from DNA/RNA precursor pool, thus preventing their incorporation into DNA/RNA and avoiding chromosomal lesions. The polypeptide is Probable inosine/xanthosine triphosphatase (Pyrobaculum aerophilum (strain ATCC 51768 / DSM 7523 / JCM 9630 / CIP 104966 / NBRC 100827 / IM2)).